The chain runs to 538 residues: MIVLICLGIEGTAEKTGVGIVDSDGNILAMAGEQLFPEKGGIHPRIAAEHHGYWIPKLIPKAIDEAGISYDDLDLISFSQGPGLGPALRIVATSARTLALSLNKPIIGVNHCIGHVEVGKLDTGAVNPVTLYVSGGNSQVISHESGRYRIFGETLDIAAGNCLDHFGRETGLGHPGGPVIEKLAKKGSYVDLPYVVKGMDFSFSGLLSAALREVKKGTPIEDVCFSLQETAFSMLVEVTERALSHTQKDEVMLCGGVSANSRLREMLKVMAEEHGAKFCMPEMKLCGDNGVMIAWLGLIMHNQFGPLDIKDTGIIQRFRTDEVEAPWVNNNDSHLKLPDNLIAKGAESDIIKSSYLGKNAVLKSRIPKAYRIAEIDSKIRKSRTKLEAKLLSDVKKSGVITPVLYDVDLENKSILMEAIEGKMLKEVIDDNLAYKIGVEIAKIHSLDIIHGDITTSNMMLRGGKLVFLDFGLGRHSDLFEDKAVDLLVLKKSLQSIDNTTASKYFDNVLEGYAESYGKNKDKIIEKIKEIESRGRYTH.

The tract at residues 1-327 (MIVLICLGIE…FRTDEVEAPW (327 aa)) is kae1. Residues His-111, His-115, and Tyr-132 each contribute to the Fe cation site. L-threonylcarbamoyladenylate contacts are provided by residues 132-136 (YVSGG), Asp-164, Gly-177, Glu-181, and Asn-260. Asp-288 provides a ligand contact to Fe cation. Residues 336 to 538 (KLPDNLIAKG…EIESRGRYTH (203 aa)) enclose the Protein kinase domain. ATP-binding positions include 342–350 (IAKGAESDI) and Lys-363. Asp-452 acts as the Proton acceptor; for kinase activity in catalysis.

It in the N-terminal section; belongs to the KAE1 / TsaD family. The protein in the C-terminal section; belongs to the protein kinase superfamily. Tyr protein kinase family. BUD32 subfamily. Component of the KEOPS complex that consists of Kae1, Bud32, Cgi121 and Pcc1; the whole complex dimerizes. Requires Fe(2+) as cofactor.

It is found in the cytoplasm. It carries out the reaction L-seryl-[protein] + ATP = O-phospho-L-seryl-[protein] + ADP + H(+). The enzyme catalyses L-threonyl-[protein] + ATP = O-phospho-L-threonyl-[protein] + ADP + H(+). It catalyses the reaction L-threonylcarbamoyladenylate + adenosine(37) in tRNA = N(6)-L-threonylcarbamoyladenosine(37) in tRNA + AMP + H(+). Its function is as follows. Required for the formation of a threonylcarbamoyl group on adenosine at position 37 (t(6)A37) in tRNAs that read codons beginning with adenine. Is a component of the KEOPS complex that is probably involved in the transfer of the threonylcarbamoyl moiety of threonylcarbamoyl-AMP (TC-AMP) to the N6 group of A37. The Kae1 domain likely plays a direct catalytic role in this reaction. The Bud32 domain probably displays kinase activity that regulates Kae1 function. The polypeptide is Probable bifunctional tRNA threonylcarbamoyladenosine biosynthesis protein (Methanobrevibacter smithii (strain ATCC 35061 / DSM 861 / OCM 144 / PS)).